The following is a 259-amino-acid chain: S-methyl-5'-thioadenosine phosphorylase (259 aa).

Residues Ser9 and 50 to 51 each bind phosphate; that span reads RH. Residue Met175 coordinates substrate. Phosphate is bound at residue Thr176. Substrate is bound at residue 199-201; sequence DLD.

This sequence belongs to the PNP/MTAP phosphorylase family. MTAP subfamily. In terms of assembly, homohexamer. Dimer of a homotrimer.

The enzyme catalyses S-methyl-5'-thioadenosine + phosphate = 5-(methylsulfanyl)-alpha-D-ribose 1-phosphate + adenine. The protein operates within amino-acid biosynthesis; L-methionine biosynthesis via salvage pathway; S-methyl-5-thio-alpha-D-ribose 1-phosphate from S-methyl-5'-thioadenosine (phosphorylase route): step 1/1. Its function is as follows. Catalyzes the reversible phosphorylation of S-methyl-5'-thioadenosine (MTA) to adenine and 5-methylthioribose-1-phosphate. Involved in the breakdown of MTA, a major by-product of polyamine biosynthesis. Responsible for the first step in the methionine salvage pathway after MTA has been generated from S-adenosylmethionine. Has broad substrate specificity with 6-aminopurine nucleosides as preferred substrates. The sequence is that of S-methyl-5'-thioadenosine phosphorylase from Mycolicibacterium smegmatis (strain ATCC 700084 / mc(2)155) (Mycobacterium smegmatis).